Reading from the N-terminus, the 270-residue chain is 4-diphosphocytidyl-2-C-methyl-D-erythritol kinase (270 aa).

Residue K8 is part of the active site. 90–100 (PIGAGLGGGSS) provides a ligand contact to ATP. D132 is an active-site residue.

Belongs to the GHMP kinase family. IspE subfamily.

It catalyses the reaction 4-CDP-2-C-methyl-D-erythritol + ATP = 4-CDP-2-C-methyl-D-erythritol 2-phosphate + ADP + H(+). Its pathway is isoprenoid biosynthesis; isopentenyl diphosphate biosynthesis via DXP pathway; isopentenyl diphosphate from 1-deoxy-D-xylulose 5-phosphate: step 3/6. Its function is as follows. Catalyzes the phosphorylation of the position 2 hydroxy group of 4-diphosphocytidyl-2C-methyl-D-erythritol. The polypeptide is 4-diphosphocytidyl-2-C-methyl-D-erythritol kinase (Cytophaga hutchinsonii (strain ATCC 33406 / DSM 1761 / CIP 103989 / NBRC 15051 / NCIMB 9469 / D465)).